We begin with the raw amino-acid sequence, 276 residues long: Protein-glutamine gamma-glutamyltransferase (276 aa).

Belongs to the bacillus TGase family.

The catalysed reaction is L-glutaminyl-[protein] + L-lysyl-[protein] = [protein]-L-lysyl-N(6)-5-L-glutamyl-[protein] + NH4(+). Its function is as follows. Probably plays a role in the assembly of the spore coat proteins by catalyzing epsilon-(gamma-glutamyl)lysine cross-links. In Bacillus cereus (strain G9842), this protein is Protein-glutamine gamma-glutamyltransferase.